We begin with the raw amino-acid sequence, 310 residues long: MKTVLILLSILGMACALSMKNLNRRAKLEDSEENGVFKYRPQYYVYKHGYFYPALKRFAVQSSSDSSEENGNGDSSEEEEEEEETSNEEGNNGGNEDSDENEDEESEAENTTLSTTTLGYGEITPGTGDIGLAAIWLPRKAGATGKKATKEDESDEEEEEEEEEENEAEVDDNEQGINGTSSNSTEVDNGHGSSGGDNGEEDGEEESVTEANTEGITVAGETTTSPNGGFKPTTPHQEVYGTTPPPFGKITTPGEYEQTGTNEYDNGYEIYESENGDPRGDNYRAYEDEYSYYKGRGYDSYDGQDYYSHQ.

A signal peptide spans 1–16; that stretch reads MKTVLILLSILGMACA. Residues S31, S62, S67, S75, S76, S98, and S106 each carry the phosphoserine modification. A disordered region spans residues 61–284; sequence QSSSDSSEEN…NGDPRGDNYR (224 aa). Residues 62–74 show a composition bias toward low complexity; sequence SSSDSSEENGNGD. 2 stretches are compositionally biased toward acidic residues: residues 75-87 and 96-108; these read SSEEEEEEEETSN and EDSDENEDEESEA. A glycan (N-linked (GlcNAc...) asparagine) is linked at N110. Phosphothreonine is present on T144. A compositionally biased stretch (acidic residues) spans 152-174; the sequence is DESDEEEEEEEEEENEAEVDDNE. A Phosphoserine modification is found at S154. Residues 175–187 show a composition bias toward polar residues; the sequence is QGINGTSSNSTEV. N178 and N183 each carry an N-linked (GlcNAc...) asparagine glycan. Positions 198 to 208 are enriched in acidic residues; that stretch reads NGEEDGEEESV. Residues 209–227 are compositionally biased toward polar residues; sequence TEANTEGITVAGETTTSPN. Position 273 is a phosphoserine (S273). The short motif at 279-281 is the Integrin-binding motif element; sequence RGD. Phosphoserine is present on S300. Sulfotyrosine occurs at positions 306 and 307.

In terms of assembly, monomer. Interacts with integrins; the interaction promotes cell adhesion.

It is found in the secreted. Functionally, binds tightly to hydroxyapatite. Appears to form an integral part of the mineralized matrix. Probably important to cell-matrix interaction. Promotes adhesion and migration of various cells via the alpha-V/beta-3 integrin receptor (ITGAV:ITGB3). The polypeptide is Integrin-binding sialoprotein (IBSP) (Bos taurus (Bovine)).